Consider the following 99-residue polypeptide: Integration host factor subunit alpha (99 aa).

It belongs to the bacterial histone-like protein family. In terms of assembly, heterodimer of an alpha and a beta chain.

Its function is as follows. This protein is one of the two subunits of integration host factor, a specific DNA-binding protein that functions in genetic recombination as well as in transcriptional and translational control. In Thioalkalivibrio sulfidiphilus (strain HL-EbGR7), this protein is Integration host factor subunit alpha.